The primary structure comprises 114 residues: UPF0342 protein PEPE_0673 (114 aa).

Belongs to the UPF0342 family.

The sequence is that of UPF0342 protein PEPE_0673 from Pediococcus pentosaceus (strain ATCC 25745 / CCUG 21536 / LMG 10740 / 183-1w).